The following is a 103-amino-acid chain: Large ribosomal subunit protein uL24 (103 aa).

Belongs to the universal ribosomal protein uL24 family. Part of the 50S ribosomal subunit.

Functionally, one of two assembly initiator proteins, it binds directly to the 5'-end of the 23S rRNA, where it nucleates assembly of the 50S subunit. One of the proteins that surrounds the polypeptide exit tunnel on the outside of the subunit. In Haemophilus ducreyi (strain 35000HP / ATCC 700724), this protein is Large ribosomal subunit protein uL24.